A 167-amino-acid polypeptide reads, in one-letter code: Small ribosomal subunit protein uS5 (167 aa).

One can recognise an S5 DRBM domain in the interval 12-75 (LQEKLITVNR…EKARRNMVTI (64 aa)).

This sequence belongs to the universal ribosomal protein uS5 family. In terms of assembly, part of the 30S ribosomal subunit. Contacts proteins S4 and S8.

Functionally, with S4 and S12 plays an important role in translational accuracy. Its function is as follows. Located at the back of the 30S subunit body where it stabilizes the conformation of the head with respect to the body. This Buchnera aphidicola subsp. Schizaphis graminum (strain Sg) protein is Small ribosomal subunit protein uS5.